Consider the following 124-residue polypeptide: Large ribosomal subunit protein bL12 (124 aa).

This sequence belongs to the bacterial ribosomal protein bL12 family. As to quaternary structure, homodimer. Part of the ribosomal stalk of the 50S ribosomal subunit. Forms a multimeric L10(L12)X complex, where L10 forms an elongated spine to which 2 to 4 L12 dimers bind in a sequential fashion. Binds GTP-bound translation factors.

Its function is as follows. Forms part of the ribosomal stalk which helps the ribosome interact with GTP-bound translation factors. Is thus essential for accurate translation. The sequence is that of Large ribosomal subunit protein bL12 from Paracoccus denitrificans (strain Pd 1222).